The chain runs to 65 residues: uncharacterized protein (65 aa).

This is an uncharacterized protein from Treponema pallidum (strain Nichols).